The chain runs to 249 residues: Ditrans,polycis-undecaprenyl-diphosphate synthase ((2E,6E)-farnesyl-diphosphate specific) (249 aa).

Residue Asp-26 is part of the active site. Residue Asp-26 participates in Mg(2+) binding. Substrate-binding positions include 27-30 (GNGR), Trp-31, Arg-39, His-43, and 71-73 (SRE). The Proton acceptor role is filled by Asn-74. Substrate-binding positions include Trp-75, Arg-77, Arg-194, and 200 to 202 (RIS). Position 213 (Glu-213) interacts with Mg(2+).

It belongs to the UPP synthase family. Homodimer. It depends on Mg(2+) as a cofactor.

The enzyme catalyses 8 isopentenyl diphosphate + (2E,6E)-farnesyl diphosphate = di-trans,octa-cis-undecaprenyl diphosphate + 8 diphosphate. Its function is as follows. Catalyzes the sequential condensation of isopentenyl diphosphate (IPP) with (2E,6E)-farnesyl diphosphate (E,E-FPP) to yield (2Z,6Z,10Z,14Z,18Z,22Z,26Z,30Z,34E,38E)-undecaprenyl diphosphate (di-trans,octa-cis-UPP). UPP is the precursor of glycosyl carrier lipid in the biosynthesis of bacterial cell wall polysaccharide components such as peptidoglycan and lipopolysaccharide. The protein is Ditrans,polycis-undecaprenyl-diphosphate synthase ((2E,6E)-farnesyl-diphosphate specific) of Buchnera aphidicola subsp. Schizaphis graminum (strain Sg).